Here is a 505-residue protein sequence, read N- to C-terminus: Structural protein 27 (505 aa).

Hydrophobic stretches follow at residues 20–40, 423–443, and 470–490; these read VSLI…FSPV, MKGI…MSTI, and IGLG…LILV.

It localises to the virion. The polypeptide is Structural protein 27 (His1 virus (isolate Australia/Victoria) (His1V)).